A 290-amino-acid chain; its full sequence is Transcription cofactor vestigial-like protein 4 (290 aa).

N-acetylmethionine is present on methionine 1. The span at 17–30 (ADDEKREAALRGEP) shows a compositional bias: basic and acidic residues. Disordered regions lie at residues 17-65 (ADDE…PGDE), 85-106 (LNKT…SPIE), 140-161 (LDAS…QQNR), and 254-290 (AAKD…SVVS). Serine 52 bears the Phosphoserine mark. The span at 92-105 (DCRRDPRERSRSPI) shows a compositional bias: basic and acidic residues. Phosphoserine is present on serine 149. Residues 150–161 (PTLTPGERQQNR) show a composition bias toward polar residues. Residue threonine 153 is modified to Phosphothreonine. A compositionally biased stretch (low complexity) spans 272–290 (PASPSAHMVSHSHSPSVVS). Serine 274 bears the Phosphoserine mark.

This sequence belongs to the vestigial family. As to quaternary structure, interacts with TEFs. Interacts with IRF2BP2.

The protein localises to the nucleus. May act as a specific coactivator for the mammalian TEFs. The chain is Transcription cofactor vestigial-like protein 4 from Homo sapiens (Human).